The following is a 639-amino-acid chain: 3D-(3,5/4)-trihydroxycyclohexane-1,2-dione hydrolase (639 aa).

Residue glutamate 65 participates in thiamine diphosphate binding. The tract at residues 437–517 (SLPGDLQRMW…INIILFDNSG (81 aa)) is thiamine pyrophosphate binding. Aspartate 488 and asparagine 515 together coordinate Mg(2+).

This sequence belongs to the TPP enzyme family. Requires Mg(2+) as cofactor. It depends on thiamine diphosphate as a cofactor.

The catalysed reaction is 3D-3,5/4-trihydroxycyclohexane-1,2-dione + H2O = 5-deoxy-D-glucuronate + H(+). It participates in polyol metabolism; myo-inositol degradation into acetyl-CoA; acetyl-CoA from myo-inositol: step 3/7. Functionally, involved in the cleavage of the C1-C2 bond of 3D-(3,5/4)-trihydroxycyclohexane-1,2-dione (THcHDO) to yield 5-deoxy-glucuronate (5DG). The polypeptide is 3D-(3,5/4)-trihydroxycyclohexane-1,2-dione hydrolase (Geobacillus thermodenitrificans (strain NG80-2)).